Consider the following 203-residue polypeptide: Small ribosomal subunit protein uS7 (203 aa).

Positions 1–21 (MSSEAPEPDAPASTDDERVSA) are disordered.

Belongs to the universal ribosomal protein uS7 family. As to quaternary structure, part of the 30S ribosomal subunit.

One of the primary rRNA binding proteins, it binds directly to 16S rRNA where it nucleates assembly of the head domain of the 30S subunit. Is located at the subunit interface close to the decoding center. The sequence is that of Small ribosomal subunit protein uS7 from Natronomonas pharaonis (strain ATCC 35678 / DSM 2160 / CIP 103997 / JCM 8858 / NBRC 14720 / NCIMB 2260 / Gabara) (Halobacterium pharaonis).